The chain runs to 321 residues: MTKYALVGDVGGTNARLALCDIASGEISQAKTYSGLDYPSLEAVIRVYLEEHKVEVKDGCIAIACPITGDWVAMTNHTWAFSIAEMKKNLGFSHLEIINDFTAVSMAIPMLKKEHLIQFGGAEPVEGKPIAVYGAGTGLGVAHLVHVDKRWVSLPGEGGHVDFAPNSEEEGIILEILRAEIGHVSAERVLSGPGLVNLYRAIVKADNRLPENLKPKDITERALADSCTDCRRALSLFCVIMGRFGGNLALNLGTFGGVFIAGGIVPRFLEFFKASGFRAAFEDKGRFKEYVHDIPVYLIVHDNPGLLGSGAHLRQTLGHIL.

8 to 13 (GDVGGT) serves as a coordination point for ATP.

It belongs to the bacterial glucokinase family.

The protein localises to the cytoplasm. It catalyses the reaction D-glucose + ATP = D-glucose 6-phosphate + ADP + H(+). The sequence is that of Glucokinase from Escherichia coli O127:H6 (strain E2348/69 / EPEC).